Reading from the N-terminus, the 700-residue chain is Receptor-type tyrosine-protein phosphatase epsilon (700 aa).

An N-terminal signal peptide occupies residues 1 to 19 (MEPLCPLLLVGFSLPLARA). At 20–46 (LRGNETTADSNETTTTSGPPDPGASQP) the chain is on the extracellular side. N-linked (GlcNAc...) asparagine glycosylation is found at Asn23 and Asn30. Residues 47–69 (LLAWLLLPLLLLLLVLLLAAYFF) traverse the membrane as a helical segment. At 70–700 (RFRKQRKAVV…DIFSDYANFK (631 aa)) the chain is on the cytoplasmic side. Tyrosine-protein phosphatase domains follow at residues 135-394 (FREE…LLEY) and 426-689 (LEEE…VQDF). Residues Asp303, 335 to 341 (CSAGVGR), and Gln379 contribute to the substrate site. Cys335 functions as the Phosphocysteine intermediate in the catalytic mechanism. Residue Cys630 is the Phosphocysteine intermediate of the active site. Residue Tyr696 is modified to Phosphotyrosine.

This sequence belongs to the protein-tyrosine phosphatase family. Receptor class 4 subfamily. As to quaternary structure, monomer. Isoform 2: Homodimer. Can form oligomers. Dimerization is increased by oxidative stress and decreased by EGFR. Isoform 2 interacts with GRB2. Post-translationally, a catalytically active cytoplasmic form (p65) is produced by proteolytic cleavage of either isoform 1, isoform 2 or isoform 3. Isoform 1 and isoform 2 are phosphorylated on tyrosine residues by tyrosine kinase Neu. In terms of processing, isoform 1 is glycosylated. In terms of tissue distribution, expressed in giant cell tumor (osteoclastoma rich in multinucleated osteoclastic cells).

It is found in the cell membrane. The protein resides in the cytoplasm. It carries out the reaction O-phospho-L-tyrosyl-[protein] + H2O = L-tyrosyl-[protein] + phosphate. Isoform 1 plays a critical role in signaling transduction pathways and phosphoprotein network topology in red blood cells. May play a role in osteoclast formation and function. Its function is as follows. Isoform 2 acts as a negative regulator of insulin receptor (IR) signaling in skeletal muscle. Regulates insulin-induced tyrosine phosphorylation of insulin receptor (IR) and insulin receptor substrate 1 (IRS-1), phosphorylation of protein kinase B and glycogen synthase kinase-3 and insulin induced stimulation of glucose uptake. In terms of biological role, isoform 1 and isoform 2 act as a negative regulator of FceRI-mediated signal transduction leading to cytokine production and degranulation, most likely by acting at the level of SYK to affect downstream events such as phosphorylation of SLP76 and LAT and mobilization of Ca(2+). This is Receptor-type tyrosine-protein phosphatase epsilon (PTPRE) from Homo sapiens (Human).